The chain runs to 170 residues: Prenyl-diphosphate phosphatase (170 aa).

The Nudix hydrolase domain maps to 25 to 155 (HIHRASQLIL…PGNYTPALRE (131 aa)). The Nudix box signature appears at 59–83 (YSVSGTVADESYEACIAREMLEEIG). Glu-77 and Glu-81 together coordinate Mg(2+).

This sequence belongs to the Nudix hydrolase family. It depends on Mg(2+) as a cofactor.

The enzyme catalyses dimethylallyl diphosphate + H2O = dimethylallyl phosphate + phosphate + H(+). It catalyses the reaction isopentenyl diphosphate + H2O = isopentenyl phosphate + phosphate + H(+). It carries out the reaction (2E,6E)-farnesyl diphosphate + H2O = (2E,6E)-farnesyl phosphate + phosphate + H(+). The catalysed reaction is (2E)-geranyl diphosphate + H2O = (2E)-geranyl phosphate + phosphate + H(+). It functions in the pathway isoprenoid biosynthesis. In terms of biological role, hydrolyzes homoallylic isopentenyl diphosphate (IPP), its allylic isomer dimethylallyl diphosphate (DMAPP) and short-chain prenyl diphosphates geranyl diphosphate (GPP) and farnesyl diphosphate (FPP) to their corresponding monophosphate forms with high activity. The preferred substrate is IPP. ADP, NADPH, Ap5A and thiamine diphosphate (TPP) are weakly hydrolyzed. No hydrolysis with ATP, dNTPs, 8-OH-dGTP, NAD+, FAD or acetyl-CoA. The likely physiological role of this enzyme is to provide a substrate dimethylallyl phosphate (DMAP) for prenylated flavin mononucleotide (prenyl-FMN) synthase MM_1871 involved in the biosynthesis of prenyl-FMN, a coenzyme required in the archaea-specific mevalonate pathway. This is Prenyl-diphosphate phosphatase from Methanosarcina mazei (strain ATCC BAA-159 / DSM 3647 / Goe1 / Go1 / JCM 11833 / OCM 88) (Methanosarcina frisia).